The chain runs to 421 residues: Fasciclin-like arabinogalactan protein ARB_02922 (421 aa).

Residues 1 to 17 form the signal peptide; it reads MLLYYILVALWATVTYA. FAS1 domains follow at residues 18 to 167 and 169 to 296; these read KSFS…DRPL and LPQS…SDVL. N-linked (GlcNAc...) asparagine glycans are attached at residues Asn-52, Asn-75, Asn-80, Asn-120, Asn-145, Asn-181, Asn-223, and Asn-300. Positions 300–401 are disordered; the sequence is NDTAKPVPNA…NTPQPGAAAT (102 aa). Gly residues-rich tracts occupy residues 344 to 356 and 372 to 387; these read TSGG…GGGE and SGGG…GGPG. A compositionally biased stretch (low complexity) spans 388 to 401; it reads PTATNTPQPGAAAT. A lipid anchor (GPI-anchor amidated glycine) is attached at Gly-397. Positions 398 to 421 are cleaved as a propeptide — removed in mature form; the sequence is AAATERAKAGLAAVVGLGVVLINA.

This sequence belongs to the fasciclin-like AGP family.

It localises to the cell membrane. Functionally, may be a cell surface adhesion protein. The sequence is that of Fasciclin-like arabinogalactan protein ARB_02922 from Arthroderma benhamiae (strain ATCC MYA-4681 / CBS 112371) (Trichophyton mentagrophytes).